Consider the following 246-residue polypeptide: Chemokine-binding protein (246 aa).

Over residues 108–125 (SESSDGNTVNTRLSSVSP) the composition is skewed to polar residues. The segment at 108-132 (SESSDGNTVNTRLSSVSPGQGKDSP) is disordered.

It belongs to the orthopoxvirus OPG001 family.

It localises to the secreted. Its function is as follows. Inhibits host immune defense by binding to host chemokines. Binds host CC chemokines (beta chemokines) such as RANTES with high affinity, but not CXC or C chemokines (alpha and gamma chemokines). This is Chemokine-binding protein (OPG001) from Monkeypox virus.